Here is a 131-residue protein sequence, read N- to C-terminus: MPVTDSIADYITRLRNAGRAKNKTTDIPYSKLRENISQLLLEKGYIKGFTVITTEKFPFIRVEMKYTAAGVPSIKEITRVSRPGRRMYEGKDIKKYLGGLGLYIISTSKGVITDKEAREQGVGGEILFRIY.

Belongs to the universal ribosomal protein uS8 family. As to quaternary structure, part of the 30S ribosomal subunit. Contacts proteins S5 and S12.

In terms of biological role, one of the primary rRNA binding proteins, it binds directly to 16S rRNA central domain where it helps coordinate assembly of the platform of the 30S subunit. This Chlorobium phaeovibrioides (strain DSM 265 / 1930) (Prosthecochloris vibrioformis (strain DSM 265)) protein is Small ribosomal subunit protein uS8.